A 216-amino-acid polypeptide reads, in one-letter code: Ribosome maturation factor RimP (216 aa).

The protein belongs to the RimP family.

It localises to the cytoplasm. Its function is as follows. Required for maturation of 30S ribosomal subunits. The sequence is that of Ribosome maturation factor RimP from Bartonella quintana (strain Toulouse) (Rochalimaea quintana).